The primary structure comprises 128 residues: Sulfurtransferase TusD (128 aa).

The Cysteine persulfide intermediate role is filled by Cys-78.

The protein belongs to the DsrE/TusD family. In terms of assembly, heterohexamer, formed by a dimer of trimers. The hexameric TusBCD complex contains 2 copies each of TusB, TusC and TusD. The TusBCD complex interacts with TusE.

It is found in the cytoplasm. Functionally, part of a sulfur-relay system required for 2-thiolation of 5-methylaminomethyl-2-thiouridine (mnm(5)s(2)U) at tRNA wobble positions. Accepts sulfur from TusA and transfers it in turn to TusE. The sequence is that of Sulfurtransferase TusD from Shigella flexneri serotype 5b (strain 8401).